We begin with the raw amino-acid sequence, 89 residues long: Small ribosomal subunit protein uS15 (89 aa).

This sequence belongs to the universal ribosomal protein uS15 family. In terms of assembly, part of the 30S ribosomal subunit. Forms a bridge to the 50S subunit in the 70S ribosome, contacting the 23S rRNA.

In terms of biological role, one of the primary rRNA binding proteins, it binds directly to 16S rRNA where it helps nucleate assembly of the platform of the 30S subunit by binding and bridging several RNA helices of the 16S rRNA. Functionally, forms an intersubunit bridge (bridge B4) with the 23S rRNA of the 50S subunit in the ribosome. In Cereibacter sphaeroides (strain ATCC 17023 / DSM 158 / JCM 6121 / CCUG 31486 / LMG 2827 / NBRC 12203 / NCIMB 8253 / ATH 2.4.1.) (Rhodobacter sphaeroides), this protein is Small ribosomal subunit protein uS15.